Reading from the N-terminus, the 293-residue chain is GTPase Era (293 aa).

One can recognise an Era-type G domain in the interval 5–174; the sequence is RTISVCIIGR…ITGKAQIAPW (170 aa). The tract at residues 13 to 20 is G1; that stretch reads GRPNSGKS. 13 to 20 lines the GTP pocket; the sequence is GRPNSGKS. Residues 39–43 are G2; the sequence is QTTRS. The interval 60-63 is G3; sequence DTPG. Residues 60–64 and 122–125 contribute to the GTP site; these read DTPGI and NKID. The segment at 122–125 is G4; it reads NKID. Positions 150–152 are G5; it reads ISA. The KH type-2 domain maps to 202–279; that stretch reads LQQELPYKLT…HLFLFVKVHE (78 aa).

The protein belongs to the TRAFAC class TrmE-Era-EngA-EngB-Septin-like GTPase superfamily. Era GTPase family. As to quaternary structure, monomer.

It is found in the cytoplasm. The protein resides in the cell inner membrane. Its function is as follows. An essential GTPase that binds both GDP and GTP, with rapid nucleotide exchange. Plays a role in 16S rRNA processing and 30S ribosomal subunit biogenesis and possibly also in cell cycle regulation and energy metabolism. The protein is GTPase Era of Rickettsia akari (strain Hartford).